A 236-amino-acid polypeptide reads, in one-letter code: 5'-methylthioadenosine/S-adenosylhomocysteine nucleosidase (236 aa).

The active-site Proton acceptor is Glu12. Substrate is bound by residues Gly78, Met153, and 174 to 175 (ME). The Proton donor role is filled by Asp198.

The protein belongs to the PNP/UDP phosphorylase family. MtnN subfamily.

The catalysed reaction is S-adenosyl-L-homocysteine + H2O = S-(5-deoxy-D-ribos-5-yl)-L-homocysteine + adenine. It catalyses the reaction S-methyl-5'-thioadenosine + H2O = 5-(methylsulfanyl)-D-ribose + adenine. It carries out the reaction 5'-deoxyadenosine + H2O = 5-deoxy-D-ribose + adenine. It functions in the pathway amino-acid biosynthesis; L-methionine biosynthesis via salvage pathway; S-methyl-5-thio-alpha-D-ribose 1-phosphate from S-methyl-5'-thioadenosine (hydrolase route): step 1/2. Functionally, catalyzes the irreversible cleavage of the glycosidic bond in both 5'-methylthioadenosine (MTA) and S-adenosylhomocysteine (SAH/AdoHcy) to adenine and the corresponding thioribose, 5'-methylthioribose and S-ribosylhomocysteine, respectively. Also cleaves 5'-deoxyadenosine, a toxic by-product of radical S-adenosylmethionine (SAM) enzymes, into 5-deoxyribose and adenine. In Geobacillus thermodenitrificans (strain NG80-2), this protein is 5'-methylthioadenosine/S-adenosylhomocysteine nucleosidase.